Reading from the N-terminus, the 316-residue chain is MDTIKIFNHGEFDTIRNKLVNLLKVVKWNTINSNVTVSSTDTIDISNCIREILYKQFKNVRNIEVSSNISFIKYNRFNDTTLTDDNVGYYLVIYLNRMKSVKTLIYPTPETVITSSEDIMFSKSLNFRFENVKRDYKLVMCSISLTYKPSICRIQYDNNKYIDISDSQEGNNLCYCVITMDPHHLIDLETICVLVNKSGKCLLVNEFYTRFRKNHIYDSFADLCMDHIFELPDTEELFTLRNDDGRNIAWDNDKLESGNNTWIPKTDDEYKFLSKLMNIAKFNNTKFDYYMLVGDTDPCTVFTFKVTKYYINLNYE.

This sequence belongs to the poxviridae OPG031 protein family.

The protein resides in the host cytoplasm. The protein localises to the host nucleus. Functionally, plays a role in the inhibition of host NF-kappa-B activation. Mechanistically, blocks the subunit p65/RELA translocation into the host nucleus. The polypeptide is Protein C4 (OPG031) (Homo sapiens (Human)).